Reading from the N-terminus, the 270-residue chain is Hemin import ATP-binding protein HmuV (270 aa).

One can recognise an ABC transporter domain in the interval 5–242 (LEAEAATYSV…SLINRVFDIE (238 aa)). Residue 37–44 (GPNGAGKS) participates in ATP binding.

This sequence belongs to the ABC transporter superfamily. Heme (hemin) importer (TC 3.A.1.14.5) family. In terms of assembly, the complex is composed of two ATP-binding proteins (HmuV), two transmembrane proteins (HmuU) and a solute-binding protein (HmuT).

Its subcellular location is the cell inner membrane. Its function is as follows. Part of the ABC transporter complex HmuTUV involved in hemin import. Responsible for energy coupling to the transport system. The chain is Hemin import ATP-binding protein HmuV from Rhodopseudomonas palustris (strain BisA53).